The sequence spans 102 residues: Carboxysome shell protein CcmK3 (102 aa).

The region spanning 4-90 is the BMC domain; it reads AVGTIQTLGF…PQENVETVMP (87 aa).

The protein belongs to the bacterial microcompartments protein family. CcmK subfamily. In terms of assembly, interacts stably with CcmK4, probably forms heterohexamers with a 1:2 CcmK3:CcmK4 stoichiometry. Bulky residues in the pore region probably preclude the formation of homohexamers by this subunit.

It is found in the carboxysome. Its function is as follows. A non-essential, minor shell protein of the carboxysome, a polyhedral inclusion where RuBisCO (ribulose bisphosphate carboxylase, rbcL-rbcS) is sequestered. Hexamers form sheets that form the facets of the polyhedral carboxysome. In PCC 7942 there are several CcmK paralogs with presumably functional differences. This subunit probably only makes heterohexamers with CcmK4. The CcmK3-CcmK4 heterohexmers have been suggested to cap other hexamers, perhaps to alter metabolite flux. The polypeptide is Carboxysome shell protein CcmK3 (Synechococcus elongatus (strain ATCC 33912 / PCC 7942 / FACHB-805) (Anacystis nidulans R2)).